The sequence spans 167 residues: MSVLKILHYPDQRLRLIAKPVEKITKEIYKITNNMIDTMYQEEGIGLAATQVNIQLQIIVIHKIHAIEKNLILINPKIIEKKGSISIEEGCLSIPEYRAFVPRFNYIKIQAINLNGNTVEIEADSILSICIQHEIDHLNGKLFIDYLSELKRERILKKLIKLKKRIK.

Fe cation contacts are provided by cysteine 91 and histidine 133. Residue glutamate 134 is part of the active site. Histidine 137 serves as a coordination point for Fe cation.

It belongs to the polypeptide deformylase family. Fe(2+) is required as a cofactor.

The enzyme catalyses N-terminal N-formyl-L-methionyl-[peptide] + H2O = N-terminal L-methionyl-[peptide] + formate. In terms of biological role, removes the formyl group from the N-terminal Met of newly synthesized proteins. Requires at least a dipeptide for an efficient rate of reaction. N-terminal L-methionine is a prerequisite for activity but the enzyme has broad specificity at other positions. The chain is Peptide deformylase from Buchnera aphidicola subsp. Schizaphis graminum (strain Sg).